Consider the following 189-residue polypeptide: ATP-dependent protease subunit HslV (189 aa).

The active site involves threonine 12. Residues alanine 172, cysteine 175, and threonine 178 each contribute to the Na(+) site.

The protein belongs to the peptidase T1B family. HslV subfamily. As to quaternary structure, a double ring-shaped homohexamer of HslV is capped on each side by a ring-shaped HslU homohexamer. The assembly of the HslU/HslV complex is dependent on binding of ATP.

The protein localises to the cytoplasm. It carries out the reaction ATP-dependent cleavage of peptide bonds with broad specificity.. Allosterically activated by HslU binding. In terms of biological role, protease subunit of a proteasome-like degradation complex believed to be a general protein degrading machinery. In Anaplasma phagocytophilum (strain HZ), this protein is ATP-dependent protease subunit HslV.